The primary structure comprises 543 residues: CTP synthase (543 aa).

The interval 1-266 (MTKFIFVTGG…DDIICERFGI (266 aa)) is amidoligase domain. Residue Ser-13 coordinates CTP. Residue Ser-13 coordinates UTP. ATP contacts are provided by residues 14 to 19 (SLGKGI) and Asp-71. Mg(2+) contacts are provided by Asp-71 and Glu-140. Residues 147–149 (DIE), 187–192 (KTKPTQ), and Lys-223 each bind CTP. UTP-binding positions include 187 to 192 (KTKPTQ) and Lys-223. The Glutamine amidotransferase type-1 domain occupies 291-543 (TVAIVGKYVE…VKAAIDHQNI (253 aa)). Residue Gly-354 participates in L-glutamine binding. The active-site Nucleophile; for glutamine hydrolysis is Cys-381. L-glutamine-binding positions include 382-385 (LGMQ), Glu-404, and Arg-471. Active-site residues include His-516 and Glu-518.

Belongs to the CTP synthase family. Homotetramer.

The catalysed reaction is UTP + L-glutamine + ATP + H2O = CTP + L-glutamate + ADP + phosphate + 2 H(+). The enzyme catalyses L-glutamine + H2O = L-glutamate + NH4(+). It carries out the reaction UTP + NH4(+) + ATP = CTP + ADP + phosphate + 2 H(+). It participates in pyrimidine metabolism; CTP biosynthesis via de novo pathway; CTP from UDP: step 2/2. Allosterically activated by GTP, when glutamine is the substrate; GTP has no effect on the reaction when ammonia is the substrate. The allosteric effector GTP functions by stabilizing the protein conformation that binds the tetrahedral intermediate(s) formed during glutamine hydrolysis. Inhibited by the product CTP, via allosteric rather than competitive inhibition. Catalyzes the ATP-dependent amination of UTP to CTP with either L-glutamine or ammonia as the source of nitrogen. Regulates intracellular CTP levels through interactions with the four ribonucleotide triphosphates. The protein is CTP synthase of Psychrobacter sp. (strain PRwf-1).